A 117-amino-acid polypeptide reads, in one-letter code: G antigen 5 (117 aa).

The tract at residues 1 to 117 is disordered; the sequence is MSWRGRSTYY…PEEGEKQSQC (117 aa). Acidic residues-rich tracts occupy residues 32–45 and 87–96; these read FSDEVEPATPEEGE and ECEDGPDGQE. The segment covering 103-117 has biased composition (basic and acidic residues); sequence EEVKTPEEGEKQSQC.

The protein belongs to the GAGE family. As to expression, expressed in a variety of tumor tissues but not in normal tissues, except testis.

The chain is G antigen 5 (GAGE5) from Homo sapiens (Human).